A 336-amino-acid polypeptide reads, in one-letter code: tRNA N6-adenosine threonylcarbamoyltransferase (336 aa).

2 residues coordinate Fe cation: H114 and H118. Substrate contacts are provided by residues 136–140 (LVSGG), D169, G182, D186, and N275. A Fe cation-binding site is contributed by D301.

It belongs to the KAE1 / TsaD family. Requires Fe(2+) as cofactor.

It localises to the cytoplasm. The catalysed reaction is L-threonylcarbamoyladenylate + adenosine(37) in tRNA = N(6)-L-threonylcarbamoyladenosine(37) in tRNA + AMP + H(+). Required for the formation of a threonylcarbamoyl group on adenosine at position 37 (t(6)A37) in tRNAs that read codons beginning with adenine. Is involved in the transfer of the threonylcarbamoyl moiety of threonylcarbamoyl-AMP (TC-AMP) to the N6 group of A37, together with TsaE and TsaB. TsaD likely plays a direct catalytic role in this reaction. The chain is tRNA N6-adenosine threonylcarbamoyltransferase from Streptococcus pneumoniae serotype 2 (strain D39 / NCTC 7466).